Reading from the N-terminus, the 146-residue chain is UPF0178 protein BCG9842_B2187 (146 aa).

It belongs to the UPF0178 family.

The chain is UPF0178 protein BCG9842_B2187 from Bacillus cereus (strain G9842).